Consider the following 485-residue polypeptide: GTPase Obg (485 aa).

An Obg domain is found at 2–159 (PRFVDRVVIH…RELTLELKTV (158 aa)). An OBG-type G domain is found at 160–341 (ADVGLIGFPS…FIFALWDMVR (182 aa)). Residues 166 to 173 (GFPSAGKS), 191 to 195 (FTTLV), 212 to 215 (DVPG), 292 to 295 (NKID), and 322 to 324 (STV) contribute to the GTP site. Mg(2+)-binding residues include Ser-173 and Thr-193. Residues 359–437 (PIAVDETGFS…IGDMTFDWEP (79 aa)) enclose the OCT domain. The disordered stretch occupies residues 439-485 (TPAGVDVQMSGRGTDTRLEQTDRVSAAERKIARRERRQSTDEPGGEE). The span at 452-468 (TDTRLEQTDRVSAAERK) shows a compositional bias: basic and acidic residues.

This sequence belongs to the TRAFAC class OBG-HflX-like GTPase superfamily. OBG GTPase family. Monomer. The cofactor is Mg(2+).

It localises to the cytoplasm. An essential GTPase which binds GTP, GDP and possibly (p)ppGpp with moderate affinity, with high nucleotide exchange rates and a fairly low GTP hydrolysis rate. Plays a role in control of the cell cycle, stress response, ribosome biogenesis and in those bacteria that undergo differentiation, in morphogenesis control. This is GTPase Obg from Mycobacterium sp. (strain MCS).